A 303-amino-acid polypeptide reads, in one-letter code: Quinolinate synthase (303 aa).

Iminosuccinate-binding residues include His-25 and Ser-42. Cys-87 is a [4Fe-4S] cluster binding site. Residues 113–115 and Ser-130 contribute to the iminosuccinate site; that span reads YVN. Cys-174 is a binding site for [4Fe-4S] cluster. Iminosuccinate-binding positions include 200–202 and Thr-217; that span reads HPE. Cys-260 lines the [4Fe-4S] cluster pocket.

Belongs to the quinolinate synthase family. Type 2 subfamily. Homodimer. It depends on [4Fe-4S] cluster as a cofactor.

Its subcellular location is the cytoplasm. It catalyses the reaction iminosuccinate + dihydroxyacetone phosphate = quinolinate + phosphate + 2 H2O + H(+). Its pathway is cofactor biosynthesis; NAD(+) biosynthesis; quinolinate from iminoaspartate: step 1/1. In terms of biological role, catalyzes the condensation of iminoaspartate with dihydroxyacetone phosphate to form quinolinate. The polypeptide is Quinolinate synthase (Pyrococcus furiosus (strain ATCC 43587 / DSM 3638 / JCM 8422 / Vc1)).